We begin with the raw amino-acid sequence, 842 residues long: Gamma-aminobutyric acid type B receptor subunit 2 (842 aa).

A signal peptide spans 1–17 (MSRWLSLLLFAVQAVGG). Topologically, residues 18–438 (YEAGEELSCK…TERRREHISS (421 aa)) are extracellular. Residues asparagine 274, asparagine 279, asparagine 327, and asparagine 366 are each glycosylated (N-linked (GlcNAc...) asparagine). The chain crosses the membrane as a helical span at residues 439–459 (ILFLAMSLLALIGIFLALIFL). The Cytoplasmic portion of the chain corresponds to 460–477 (LINFRYRNHRFIKMSSPN). Residues 478-498 (LNNIIIAGSICTFASVIMLGL) form a helical membrane-spanning segment. At 499–506 (DTRIVSPD) the chain is on the extracellular side. Residues 507–527 (VFVWLCYTKTWTLCIGFTLSF) form a helical membrane-spanning segment. The Cytoplasmic segment spans residues 528–556 (GAMFSKTWRVHSIFTNIRMDRKAIKDSKL). Residues 557–577 (FIILGILLFIDICVLVTWAFV) form a helical membrane-spanning segment. Residues 578 to 610 (SPFSYTVTELPHIPEDNIVIIPEVEKCNSSHSG) lie on the Extracellular side of the membrane. Residue asparagine 605 is glycosylated (N-linked (GlcNAc...) asparagine). A helical transmembrane segment spans residues 611–631 (VFQAVLYAVKGVLMILGCFLA). The Cytoplasmic segment spans residues 632–647 (WETRHVNVPALNDSKY). Residues 648–668 (IGTSVYCCVVMSVLGLSTSVI) traverse the membrane as a helical segment. Topologically, residues 669 to 676 (LQERVNEM) are extracellular. A helical membrane pass occupies residues 677–697 (FSLASFFVIFSTTLTLCLVFV). The Cytoplasmic segment spans residues 698–842 (PKVIELARNP…VDPDEPSTKL (145 aa)). The segment covering 725–740 (AKTSQPMSPQPRSDSS) has biased composition (polar residues). 2 disordered regions span residues 725-744 (AKTS…GDLI) and 791-842 (SPSS…STKL).

It belongs to the G-protein coupled receptor 3 family. May form a heterodimer with gbb-1. As to expression, expressed in cholinergic motor neurons.

The protein resides in the cell membrane. Its function is as follows. Component of a heterodimeric G-protein coupled receptor for GABA, formed by gbb-1 and gbb-2. Within the heterodimeric GABA receptor, only gbb-1 seems to bind agonists, while gbb-2 mediates coupling to G proteins. Ligand binding causes a conformation change that triggers signaling via guanine nucleotide-binding proteins (G proteins) and modulates the activity of down-stream effectors, such as adenylate cyclase. Signaling inhibits adenylate cyclase, stimulates phospholipase A2, activates potassium channels, inactivates voltage-dependent calcium-channels and modulates inositol phospholipid hydrolysis. Plays a critical role in the fine-tuning of inhibitory synaptic transmission. Pre-synaptic GABA receptor inhibits neurotransmitter release by down-regulating high-voltage activated calcium channels, whereas postsynaptic GABA receptor decreases neuronal excitability by activating a prominent inwardly rectifying potassium (Kir) conductance that underlies the late inhibitory postsynaptic potentials. Along with gbb-1, may couple to the G(o)-alpha G-protein goa-1 to negatively regulate cholinergic receptor activity in the presence of high levels of acetylcholine in ventral cord motor neurons. As acetylcholine depolarizes body wall muscles, modulation of acetylcholine levels most likely results in the control of locomotory behavior. Regulates locomotory behavior in response to GABA release by GABAergic motor neurons. The protein is Gamma-aminobutyric acid type B receptor subunit 2 of Caenorhabditis elegans.